The sequence spans 595 residues: Parathyroid hormone/parathyroid hormone-related peptide receptor (595 aa).

The first 28 residues, 1–28 (MGAVRIAPGLALLLCCPVLSSAYALVDA), serve as a signal peptide directing secretion. The Extracellular portion of the chain corresponds to 29–188 (DDVMTKEEQI…REREVFDRLG (160 aa)). 3 disulfides stabilise this stretch: Cys-48/Cys-117, Cys-108/Cys-148, and Cys-131/Cys-170. The segment at 66-103 (DKGWASASTSGKPKKEKASGKLYPESEEDKEVPTGSRH) is disordered. N-linked (GlcNAc...) asparagine glycans are attached at residues Asn-151, Asn-161, Asn-166, and Asn-176. A helical transmembrane segment spans residues 189 to 209 (MIYTVGYSVSLASLTVAVLIL). At 210–223 (AYFRRLHCTRNYIH) the chain is on the cytoplasmic side. Residues 224–244 (MHLFLSFMLRAVSIFVKDAVL) traverse the membrane as a helical segment. Residues 245–294 (YSGATLDEAERLTEEELRAIAQAPPPPTAAAGYAGCRVAVTFFLYFLATN) are Extracellular-facing. The chain crosses the membrane as a helical span at residues 295-315 (YYWILVEGLYLHSLIFMAFFS). Topologically, residues 316–318 (EKK) are cytoplasmic. Residues 319–339 (YLWGFTVFGWGLPAVFVAVWV) form a helical membrane-spanning segment. At 340 to 360 (SVRATLANTGCWDLSSGNKKW) the chain is on the extracellular side. A helical transmembrane segment spans residues 361-381 (IIQVPILASIVLNFILFINIV). Over 382 to 404 (RVLATKLRETNAGRCDTRQQYRK) the chain is Cytoplasmic. A helical transmembrane segment spans residues 405 to 425 (LLKSTLVLMPLFGVHYIVFMA). At 426-439 (TPYTEVSGTLWQVQ) the chain is on the extracellular side. Residues 440-460 (MHYEMLFNSFQGFFVAIIYCF) form a helical membrane-spanning segment. Residues 461-595 (CNGEVQAEIK…LLQEEWETVM (135 aa)) are Cytoplasmic-facing. The short motif at 473–476 (WSRW) is the Important for interaction with G proteins element. Residues 528–595 (TTTATTNGHP…LLQEEWETVM (68 aa)) form a disordered region. Positions 547-559 (APTLPATPPATAA) are enriched in low complexity. Thr-553 is modified (phosphothreonine).

This sequence belongs to the G-protein coupled receptor 2 family. Homodimer in the absence of bound ligand. Peptide hormone binding leads to dissociation of the homodimer. N-glycosylated. In terms of tissue distribution, high levels in the kidney, with much lower levels in aorta, heart, lung, prostate, testis, and skeletal muscle.

The protein resides in the cell membrane. In terms of biological role, G-protein-coupled receptor for parathyroid hormone (PTH) and for parathyroid hormone-related peptide (PTHLH). Ligand binding causes a conformation change that triggers signaling via guanine nucleotide-binding proteins (G proteins) and modulates the activity of downstream effectors, such as adenylate cyclase (cAMP). PTH1R is coupled to G(s) G alpha proteins and mediates activation of adenylate cyclase activity. PTHLH dissociates from PTH1R more rapidly than PTH; as consequence, the cAMP response induced by PTHLH decays faster than the response induced by PTH. This is Parathyroid hormone/parathyroid hormone-related peptide receptor (PTH1R) from Canis lupus familiaris (Dog).